Reading from the N-terminus, the 485-residue chain is Proline--tRNA ligase (485 aa).

It belongs to the class-II aminoacyl-tRNA synthetase family. ProS type 3 subfamily. Homodimer.

It localises to the cytoplasm. It catalyses the reaction tRNA(Pro) + L-proline + ATP = L-prolyl-tRNA(Pro) + AMP + diphosphate. Catalyzes the attachment of proline to tRNA(Pro) in a two-step reaction: proline is first activated by ATP to form Pro-AMP and then transferred to the acceptor end of tRNA(Pro). This is Proline--tRNA ligase from Methanopyrus kandleri (strain AV19 / DSM 6324 / JCM 9639 / NBRC 100938).